The sequence spans 363 residues: 3-dehydroquinate synthase (363 aa).

NAD(+) is bound by residues 75 to 80, 109 to 113, 133 to 134, lysine 146, lysine 155, and 173 to 176; these read DAEEGK, GAVTD, TS, and TLQT. Positions 188, 251, and 267 each coordinate Zn(2+).

Belongs to the sugar phosphate cyclases superfamily. Dehydroquinate synthase family. Co(2+) serves as cofactor. Zn(2+) is required as a cofactor. It depends on NAD(+) as a cofactor.

It is found in the cytoplasm. It catalyses the reaction 7-phospho-2-dehydro-3-deoxy-D-arabino-heptonate = 3-dehydroquinate + phosphate. The protein operates within metabolic intermediate biosynthesis; chorismate biosynthesis; chorismate from D-erythrose 4-phosphate and phosphoenolpyruvate: step 2/7. Functionally, catalyzes the conversion of 3-deoxy-D-arabino-heptulosonate 7-phosphate (DAHP) to dehydroquinate (DHQ). The protein is 3-dehydroquinate synthase of Paenarthrobacter aurescens (strain TC1).